Consider the following 852-residue polypeptide: MMMVHSMSRDMMNRESPDKGLDSGKYVRYTPEQVEALERVYTECPKPSSLRRQQLIRECPILSNIEPKQIKVWFQNRRCREKQRKEAARLQTVNRKLNAMNKLLMEENDRLQKQVSNLVYENGHMKHQLHTASGTTTDNSCESVVVSGQQHQQQNPNPQHQQRDANNPAGLLSIAEEALAEFLSKATGTAVDWVQMIGMKPGPDSIGIVAISRNCSGIAARACGLVSLEPMKVAEILKDRPSWLRDCRSVDTLSVIPAGNGGTIELIYTQMYAPTTLAAARDFWTLRYSTCLEDGSYVVCERSLTSATGGPTGPPSSNFVRAEMKPSGFLIRPCDGGGSILHIVDHVDLDAWSVPEVMRPLYESSKILAQKMTVAALRHVRQIAQETSGEVQYGGGRQPAVLRTFSQRLCRGFNDAVNGFVDDGWSPMGSDGAEDVTVMINLSPGKFGGSQYGNSFLPSFGSGVLCAKASMLLQNVPPAVLVRFLREHRSEWADYGVDAYAAASLRASPFAVPCARAGGFPSNQVILPLAQTVEHEESLEVVRLEGHAYSPEDMGLARDMYLLQLCSGVDENVVGGCAQLVFAPIDESFADDAPLLPSGFRIIPLEQKSTPNGASANRTLDLASALEGSTRQAGEADPNGCNFRSVLTIAFQFTFDNHSRDSVASMARQYVRSIVGSIQRVALAIAPRPGSNISPISVPTSPEALTLVRWISRSYSLHTGADLFGSDSQTSGDTLLHQLWNHSDAILCCSLKTNASPVFTFANQTGLDMLETTLVALQDIMLDKTLDEPGRKALCSEFPKIMQQGYAHLPAGVCASSMGRMVSYEQATVWKVLEDDESNHCLAFMFVNWSFV.

Residues 1 to 25 are disordered; it reads MMMVHSMSRDMMNRESPDKGLDSGK. Residues 7–22 are compositionally biased toward basic and acidic residues; that stretch reads MSRDMMNRESPDKGLD. The homeobox DNA-binding region spans 22-85; sequence DSGKYVRYTP…NRRCREKQRK (64 aa). Residues 80–122 are a coiled coil; that stretch reads REKQRKEAARLQTVNRKLNAMNKLLMEENDRLQKQVSNLVYEN. A ZIP domain region spans residues 80 to 130; sequence REKQRKEAARLQTVNRKLNAMNKLLMEENDRLQKQVSNLVYENGHMKHQLH. Residues 130-148 are compositionally biased toward polar residues; it reads HTASGTTTDNSCESVVVSG. Residues 130-166 are disordered; that stretch reads HTASGTTTDNSCESVVVSGQQHQQQNPNPQHQQRDAN. Low complexity predominate over residues 149-160; sequence QQHQQQNPNPQH. In terms of domain architecture, START spans 164–392; the sequence is DANNPAGLLS…IAQETSGEVQ (229 aa).

The protein belongs to the HD-ZIP homeobox family. Class III subfamily. In terms of assembly, homodimer. Heterodimer with ZPR3. Interacts with ESR1 and ESR2. Interacts with ZPR3. Expressed in the center of the meristem and on the adaxial side of the leaves.

It localises to the nucleus. With respect to regulation, inhibited by ZPR3. Probable transcription factor involved in the determination of adaxial-abaxial polarity in ovule primordium. Specifies adaxial leaf fates. The protein is Homeobox-leucine zipper protein ATHB-14 (ATHB-14) of Arabidopsis thaliana (Mouse-ear cress).